The following is a 284-amino-acid chain: MEMO1 family protein YG5714_2180 (284 aa).

This sequence belongs to the MEMO1 family.

The sequence is that of MEMO1 family protein YG5714_2180 from Saccharolobus islandicus (strain Y.G.57.14 / Yellowstone #1) (Sulfolobus islandicus).